A 323-amino-acid chain; its full sequence is 4-diphosphocytidyl-2-C-methyl-D-erythritol kinase (323 aa).

The active site involves Lys-25. Residue 110–120 (PVAGGMAGGSA) coordinates ATP. The active site involves Asp-152.

Belongs to the GHMP kinase family. IspE subfamily.

The enzyme catalyses 4-CDP-2-C-methyl-D-erythritol + ATP = 4-CDP-2-C-methyl-D-erythritol 2-phosphate + ADP + H(+). The protein operates within isoprenoid biosynthesis; isopentenyl diphosphate biosynthesis via DXP pathway; isopentenyl diphosphate from 1-deoxy-D-xylulose 5-phosphate: step 3/6. Its function is as follows. Catalyzes the phosphorylation of the position 2 hydroxy group of 4-diphosphocytidyl-2C-methyl-D-erythritol. This chain is 4-diphosphocytidyl-2-C-methyl-D-erythritol kinase, found in Mycobacterium leprae (strain Br4923).